Consider the following 183-residue polypeptide: Ly6/PLAUR domain-containing protein 6B (183 aa).

The first 39 residues, 1-39, serve as a signal peptide directing secretion; that stretch reads MLYKSSDRPAHKVSMLLLCHALAIAVVQIVIFSESWAFA. Positions 60–151 constitute a UPAR/Ly6 domain; the sequence is FKCFTCENAG…VELPTNHTNA (92 aa). The tract at residues 60-154 is sufficient for inhibiting alpha-7 nAChR currents; the sequence is FKCFTCENAG…PTNHTNAVFA (95 aa). 6 cysteine pairs are disulfide-bonded: Cys62/Cys90, Cys65/Cys74, Cys83/Cys109, Cys115/Cys134, Cys120/Cys131, and Cys135/Cys140. Ser164 carries the GPI-anchor amidated serine lipid modification. Residues 165-183 constitute a propeptide, removed in mature form; the sequence is SAPTLYLPVLAWVFVLPLL.

The protein localises to the cell membrane. Functionally, likely acts as a modulator of nicotinic acetylcholine receptors (nAChRs) activity. In vitro acts on nAChRs in a subtype- and stoichiometry-dependent manner. Modulates specifically alpha-3(3):beta-4(2) nAChRs by enhancing the sensitivity to ACh, decreasing ACh-induced maximal current response and increasing the rate of desensitization to ACh; has no effect on alpha-7 homomeric nAChRs; modulates alpha-3(2):alpha-5:beta-4(2) nAChRs in the context of CHRNA5/alpha-5 variant Asn-398 but not its wild-type sequence. However, according to another report in vitro it can weakly inhibits alpha-7 nAChRs. The protein is Ly6/PLAUR domain-containing protein 6B (LYPD6B) of Homo sapiens (Human).